The primary structure comprises 336 residues: MIMKISMAMCKQPLPPSPTLDFPPARFGPNMLTLNPYGPKDKVVVIMGATGTGKSRLSVDIATRFRAEIINSDKIQVHQGLDIVTNKITSEESCGVPHHLLGVLPPEADLTAANYCHMANLSIESVLNRGKLPIIVGGSNSYVEALVDDKENKFRSRYDCCFLWVDVALPVLHGFVSERVDKMVESGMVEEVREFFDFSNSDYSRGIKKAIGFPEFDRFFRNEQFLNVEDREELLSKVLEEIKRNTFELACRQREKIERLRKVKKWSIQRVDATPVFTKRRSKMDANVAWERLVAGPSTDTVSRFLLDIASRRPLVEASTAVAAAMERELSRCLVA.

A chloroplast-targeting transit peptide spans 1–55; the sequence is MIMKISMAMCKQPLPPSPTLDFPPARFGPNMLTLNPYGPKDKVVVIMGATGTGKS. 48 to 55 lines the ATP pocket; that stretch reads GATGTGKS. Cysteine 333 is subject to Cysteine methyl ester. Cysteine 333 is lipidated: S-farnesyl cysteine. Positions 334–336 are cleaved as a propeptide — removed in mature form; sequence LVA.

It belongs to the IPP transferase family. In terms of processing, farnesylated. In terms of tissue distribution, expressed the phloem companion cells.

It localises to the plastid. Its subcellular location is the chloroplast. It is found in the nucleus membrane. The protein resides in the cytoplasm. The catalysed reaction is dimethylallyl diphosphate + ADP = N(6)-(dimethylallyl)adenosine 5'-diphosphate + diphosphate. It carries out the reaction dimethylallyl diphosphate + ATP = N(6)-(dimethylallyl)adenosine 5'-triphosphate + diphosphate. Functionally, involved in cytokinin biosynthesis. Catalyzes the transfer of an isopentenyl group from dimethylallyl diphosphate (DMAPP) to ATP and ADP. The polypeptide is Adenylate isopentenyltransferase 3, chloroplastic (IPT3) (Arabidopsis thaliana (Mouse-ear cress)).